A 4466-amino-acid chain; its full sequence is Dynein beta chain, ciliary (4466 aa).

The interval 1–1813 (MADVVDPRLE…YANICDAQFK (1813 aa)) is stem. 154–161 (AGQVKGKT) contacts ATP. Coiled-coil stretches lie at residues 733–805 (TVLE…WTKQ), 1036–1056 (TLDQFKEQVDTYEKIYSEADE), 1306–1337 (WLEINVEQMEMDCKKFAKDIRSLDKEMRAWDA), and 1443–1468 (LLKSNEELIETLEDNQVQLQNLMTSK). 4 AAA regions span residues 1814–2035 (YSYE…VLVV), 2095–2316 (KVVK…VRFK), 2422–2669 (ELDP…VFQG), and 2767–3016 (TYNE…ERRY). ATP contacts are provided by residues 1852-1859 (GPAGTGKT), 2133-2140 (GNAGTGKS), 2460-2467 (GNAGLGKS), and 2805-2812 (GVGGSGKQ). Coiled coils occupy residues 3033–3092 (SLLS…QVVG), 3263–3325 (EPKR…SRTI), and 3573–3642 (QERP…EEAK). The interval 3033–3325 (SLLSMKSKEL…QEAEATSRTI (293 aa)) is stalk. AAA stretches follow at residues 3409 to 3636 (LTDD…EISV) and 3846 to 4072 (VRNF…VLYN).

It belongs to the dynein heavy chain family. As to quaternary structure, consists of at least two heavy chains (alpha and beta), three intermediate chains and several light chains.

It is found in the cell projection. It localises to the cilium. The protein resides in the flagellum. The protein localises to the cytoplasm. Its subcellular location is the cytoskeleton. It is found in the flagellum axoneme. Its function is as follows. Force generating protein of eukaryotic cilia and flagella. Produces force towards the minus ends of microtubules. Dynein has ATPase activity; the force-producing power stroke is thought to occur on release of ADP. The chain is Dynein beta chain, ciliary from Tripneustes gratilla (Hawaian sea urchin).